A 314-amino-acid chain; its full sequence is MQILLANPRGFCAGVDRAITIVERALEIFEPPIYVRHEVVHNKYVVSKLREAGAVFVEELHEVPDDQIVIFSAHGVSQAVRQEAKDRGLRVFDATCPLVTKVHMEVTRASRKGHECILIGHAGHPEVEGTMGQYNNDEGGIYLVESPEDVAKLEVKDPGNLHYMSQTTLSVDDTADVIDALRQKFPDINGPRKDDICYATQNRQDAVRELASDADVMLVVGARNSSNSNRLRELSEKMGTPAYLIDDASCIDKAWLEGHEKVAVTAGASAPEVLVKEVIAKLQEWGGKTAVELSGREENITFSIPPELRPHPVG.

Residue cysteine 12 coordinates [4Fe-4S] cluster. 2 residues coordinate (2E)-4-hydroxy-3-methylbut-2-enyl diphosphate: histidine 41 and histidine 74. Dimethylallyl diphosphate is bound by residues histidine 41 and histidine 74. Isopentenyl diphosphate is bound by residues histidine 41 and histidine 74. [4Fe-4S] cluster is bound at residue cysteine 96. Residue histidine 124 participates in (2E)-4-hydroxy-3-methylbut-2-enyl diphosphate binding. Dimethylallyl diphosphate is bound at residue histidine 124. Histidine 124 serves as a coordination point for isopentenyl diphosphate. The active-site Proton donor is the glutamate 126. Threonine 167 contacts (2E)-4-hydroxy-3-methylbut-2-enyl diphosphate. Cysteine 197 is a binding site for [4Fe-4S] cluster. Positions 225, 226, 227, and 269 each coordinate (2E)-4-hydroxy-3-methylbut-2-enyl diphosphate. The dimethylallyl diphosphate site is built by serine 225, serine 226, asparagine 227, and serine 269. Isopentenyl diphosphate-binding residues include serine 225, serine 226, asparagine 227, and serine 269.

It belongs to the IspH family. The cofactor is [4Fe-4S] cluster.

The catalysed reaction is isopentenyl diphosphate + 2 oxidized [2Fe-2S]-[ferredoxin] + H2O = (2E)-4-hydroxy-3-methylbut-2-enyl diphosphate + 2 reduced [2Fe-2S]-[ferredoxin] + 2 H(+). The enzyme catalyses dimethylallyl diphosphate + 2 oxidized [2Fe-2S]-[ferredoxin] + H2O = (2E)-4-hydroxy-3-methylbut-2-enyl diphosphate + 2 reduced [2Fe-2S]-[ferredoxin] + 2 H(+). The protein operates within isoprenoid biosynthesis; dimethylallyl diphosphate biosynthesis; dimethylallyl diphosphate from (2E)-4-hydroxy-3-methylbutenyl diphosphate: step 1/1. Its pathway is isoprenoid biosynthesis; isopentenyl diphosphate biosynthesis via DXP pathway; isopentenyl diphosphate from 1-deoxy-D-xylulose 5-phosphate: step 6/6. Catalyzes the conversion of 1-hydroxy-2-methyl-2-(E)-butenyl 4-diphosphate (HMBPP) into a mixture of isopentenyl diphosphate (IPP) and dimethylallyl diphosphate (DMAPP). Acts in the terminal step of the DOXP/MEP pathway for isoprenoid precursor biosynthesis. This Idiomarina loihiensis (strain ATCC BAA-735 / DSM 15497 / L2-TR) protein is 4-hydroxy-3-methylbut-2-enyl diphosphate reductase.